A 1003-amino-acid chain; its full sequence is Alpha-1,4 glucan phosphorylase L isozyme, chloroplastic/amyloplastic (1003 aa).

A chloroplast-targeting transit peptide spans 1 to 64 (MASMTMRFHP…RRRSAFSVKC (64 aa)). Disordered stretches follow at residues 71–91 (KQKV…SSFA) and 526–593 (SSEE…KKLP). A compositionally biased stretch (acidic residues) spans 537–553 (GEEEETSKEGGEEEEEK). Basic and acidic residues predominate over residues 569 to 580 (EVEKAIAEKDGT). Lysine 849 is modified (N6-(pyridoxal phosphate)lysine).

Belongs to the glycogen phosphorylase family. Requires pyridoxal 5'-phosphate as cofactor. As to expression, found predominantly in cotyledons and early seed coat.

The protein resides in the plastid. It is found in the chloroplast. Its subcellular location is the amyloplast. It carries out the reaction [(1-&gt;4)-alpha-D-glucosyl](n) + phosphate = [(1-&gt;4)-alpha-D-glucosyl](n-1) + alpha-D-glucose 1-phosphate. Its function is as follows. Phosphorylase is an important allosteric enzyme in carbohydrate metabolism. Enzymes from different sources differ in their regulatory mechanisms and in their natural substrates. However, all known phosphorylases share catalytic and structural properties. In terms of biological role, the L isoform exhibits higher affinity for unbranched substrates such as glucan-like amylose and maltodextrin. The polypeptide is Alpha-1,4 glucan phosphorylase L isozyme, chloroplastic/amyloplastic (PHO1) (Vicia faba (Broad bean)).